The sequence spans 378 residues: Response regulator aspartate phosphatase A (378 aa).

TPR repeat units lie at residues 101 to 137, 148 to 181, 183 to 215, 222 to 255, 261 to 294, and 336 to 369; these read YYFNFFRGMYEFKQKMFVSAMMYYKRAEKNLALVSDD, AEIFYNLKQTYVSMSYAVQALETYQMYETYTVRR, QCEFVIAGNYDDMQYPERALPHLELALDLAKKE, SSALYNLGNCYEKMGELQKAAEYFGKSVSICKSE, PHSIYSLTQVLYKQKNDAEAQKKYREGLEIARQY, and EELAHDAAQFYIENGQPEKALSFYEKMVHAQKQI.

The protein belongs to the Rap family. Homodimer. Interacts with its substrate, phosphorylated Spo0F, and its inhibitor, the PhrA pentapeptide. The RapA dimer forms a stable complex with two molecules of phosphorylated Spo0F. The complex is dissociated after dephosphorylation of Spo0F by RapA. The cofactor is Mn(2+).

The protein localises to the cytoplasm. Phosphatase activity is inhibited by the phosphatase regulator PhrA. Interaction with PhrA dissociates the RapA-Spo0F complex. Activity is abolished in the presence of EDTA. Involved in the regulation of sporulation. Acts as a phosphatase that specifically dephosphorylates the sporulation initiation phosphotransferase Spo0F and inhibits its activity. In Bacillus subtilis (strain 168), this protein is Response regulator aspartate phosphatase A.